A 569-amino-acid polypeptide reads, in one-letter code: Pyrophosphate--fructose 6-phosphate 1-phosphotransferase subunit beta (569 aa).

Residue G107 coordinates diphosphate. D201 serves as a coordination point for Mg(2+). Substrate-binding positions include 229 to 231, 268 to 269, 276 to 278, E337, and 442 to 445; these read TID, KY, MGR, and YEGR. Residue D231 is the Proton acceptor of the active site.

The protein belongs to the phosphofructokinase type A (PFKA) family. PPi-dependent PFK group II subfamily. Clade 'Long' sub-subfamily. As to quaternary structure, tetramer of two alpha (regulatory) and two beta (catalytic) chains. It depends on Mg(2+) as a cofactor.

Its subcellular location is the cytoplasm. It catalyses the reaction beta-D-fructose 6-phosphate + diphosphate = beta-D-fructose 1,6-bisphosphate + phosphate + H(+). Its pathway is carbohydrate degradation; glycolysis; D-glyceraldehyde 3-phosphate and glycerone phosphate from D-glucose: step 3/4. Allosterically activated by fructose 2,6-bisphosphate. In terms of biological role, catalytic subunit of pyrophosphate--fructose 6-phosphate 1-phosphotransferase. Catalyzes the phosphorylation of D-fructose 6-phosphate, the first committing step of glycolysis. Uses inorganic phosphate (PPi) as phosphoryl donor instead of ATP like common ATP-dependent phosphofructokinases (ATP-PFKs), which renders the reaction reversible, and can thus function both in glycolysis and gluconeogenesis. This Solanum tuberosum (Potato) protein is Pyrophosphate--fructose 6-phosphate 1-phosphotransferase subunit beta.